The primary structure comprises 814 residues: MEPEINCSELCDSFPGQELDRRPLHDLCKTTITSSHHSSKTISSLSPVLLGIVWTFLSCGLLLILFFLAFTIHCRKNRIVKMSSPNLNIVTLLGSCLTYSSAYLFGIQDVLVGSSMETLIQTRLSMLCIGTSLVFGPILGKSWRLYKVFTQRVPDKRVIIKDLQLLGLVAALLMADVILLMTWVLTDPIQCLQILSVSMTVTGKDVSCTSTSTHFCASRYSDVWIALIWGCKGLLLLYGAYLAGLTGHVSSPPVNQSLTIMVGVNLLVLAAGLLFVVTRYLHSWPNLVFGLTSGGIFVCTTTINCFIFIPQLKQWKAFEEENQTIRRMAKYFSTPNKSFHTQYGEEENCHPRGEKSSMERLLTEKNAVIESLQEQVNNAKEKIVRLMSAECTYDLPEGAAPPASSPNKDVQAVASVHTLAAAQGPSGHLSDFQNDPGMAARDSQCTSGPSSYAQSLEGPGKDSSFSPGKEEKISDSKDFSDHLDSGCSQKPWTEQSLGPERGDQVPMNPSQSLLPERGGSDPQRQRHLENSEEPPERRSRVSSVIREKLQEVLQDLGLGPEASLSTAPSCHQQTWKNSAAFSPQKMPLSKELGFSPYMVRRRRAAQRARSHFPGSAPSSVGHRANRTVPGAHSRLHVQNGDSPSLAPQTTDSRVRRPSSRKPSLPSDPQDRPGTLEGSKQSQTEPEGARGSKAAFLRQPSGSGRAPSPAAPCLSKASPDLPEQWQLWPPVPSGCASLSSQHSYFDTESSSSDEFFCRCHRPYCEICFQSSSDSSDSGTSDTDPEPTGGLASWEKLWARSKPIVNFKDDLKPTLV.

Residues 1–47 (MEPEINCSELCDSFPGQELDRRPLHDLCKTTITSSHHSSKTISSLSP) are Extracellular-facing. The N-linked (GlcNAc...) asparagine glycan is linked to N6. Residues 48–68 (VLLGIVWTFLSCGLLLILFFL) form a helical membrane-spanning segment. At 69 to 86 (AFTIHCRKNRIVKMSSPN) the chain is on the cytoplasmic side. Residues 87 to 107 (LNIVTLLGSCLTYSSAYLFGI) form a helical membrane-spanning segment. Residues 108–118 (QDVLVGSSMET) are Extracellular-facing. Residues 119 to 139 (LIQTRLSMLCIGTSLVFGPIL) traverse the membrane as a helical segment. Topologically, residues 140–164 (GKSWRLYKVFTQRVPDKRVIIKDLQ) are cytoplasmic. A helical transmembrane segment spans residues 165 to 185 (LLGLVAALLMADVILLMTWVL). Residues 186–222 (TDPIQCLQILSVSMTVTGKDVSCTSTSTHFCASRYSD) are Extracellular-facing. A helical transmembrane segment spans residues 223 to 243 (VWIALIWGCKGLLLLYGAYLA). Over 244-257 (GLTGHVSSPPVNQS) the chain is Cytoplasmic. Residues 258 to 278 (LTIMVGVNLLVLAAGLLFVVT) form a helical membrane-spanning segment. Over 279 to 288 (RYLHSWPNLV) the chain is Extracellular. A helical membrane pass occupies residues 289–309 (FGLTSGGIFVCTTTINCFIFI). Residues 310-814 (PQLKQWKAFE…FKDDLKPTLV (505 aa)) are Cytoplasmic-facing. Residues 354–390 (EKSSMERLLTEKNAVIESLQEQVNNAKEKIVRLMSAE) adopt a coiled-coil conformation. 3 disordered regions span residues 422–545 (AQGP…SSVI), 557–724 (GLGP…PEQW), and 769–792 (SSSD…LASW). The span at 443 to 454 (SQCTSGPSSYAQ) shows a compositional bias: polar residues. The segment covering 468 to 484 (GKEEKISDSKDFSDHLD) has biased composition (basic and acidic residues). Residues 486-496 (GCSQKPWTEQS) show a composition bias toward polar residues. The segment covering 523 to 545 (QRQRHLENSEEPPERRSRVSSVI) has biased composition (basic and acidic residues). The span at 563–581 (SLSTAPSCHQQTWKNSAAF) shows a compositional bias: polar residues. A compositionally biased stretch (basic residues) spans 599-610 (VRRRRAAQRARS). Residues 639–651 (NGDSPSLAPQTTD) show a composition bias toward polar residues. The span at 769–780 (SSSDSSDSGTSD) shows a compositional bias: low complexity.

Belongs to the G-protein coupled receptor 3 family. GABA-B receptor subfamily. In terms of tissue distribution, ubiquitous expression both in the CNS and in peripheral tissues. Very high expression in fetal brain and testis relative to expression in other tissues.

It is found in the cell membrane. Its function is as follows. Orphan G-protein coupled receptor involved in the regulation of hair cell orientation in mechanosensory organs of the inner ear. It is required to trigger a 180 degree reversal in hair cell orientation, creating a virtual line of polarity reversal (LPR) across which stereociliary bundles are arranged in opposite orientations. This Homo sapiens (Human) protein is Probable G-protein coupled receptor 156 (GPR156).